The primary structure comprises 641 residues: MSDEGPGTGPGNGLGQKEDSSGPEGSGGSGPQRRGGDNHGRGRGRGRGRGGGRPGAPGGSGSGPRHRDGVRRPQKRPSCIGCKGAHGGTGSGAGAGGAGAGGAGAGGGAGAGGGAGGAGGAGGAGAGGGAGAGGGAGGAGGAGAGGGAGAGGGAGGAGAGGGAGGAGGAGAGGGAGAGGGAGGAGAGGGAGGAGGAGAGGGAGAGGAGGAGGAGAGGAGAGGGAGGAGGAGAGGAGAGGAGAGGAGAGGAGGAGAGGAGGAGAGGAGGAGAGEEAGGAGAGGGAGGAGAGGAGGAGAGGAGGAGAGGAGGAGAGGGAGAGGAGAGGGGRGRGGSGGRGRGGSGGRGRGGSGGRRGRGRERARGRSRERARGRGRGRGEKRPRSPSSQSSSSGSPPRRPPPGRRPFFHPVGDADYFEYLQEGGPDGEPDVPPGAIEQGPTDDPGEGPSTGPRGQGDGGRRKKGGWFGKHRGQGGSNPKFENIAEGLRVLLARSHVERTTEEGNWVAGVFVYGGSKTSLYNLRRGIALAVPQCRITPLSRLPFGMAPGPGPQPGPLRESIVCYFMVFLQTHIFAEVLKDAIKDLVMTKPAPTCNIKVTVCSFDDGVDLPPWFPPMVEGAAAEGDDGDDGDEGGDGDEGEEGQE.

The span at 1 to 14 (MSDEGPGTGPGNGL) shows a compositional bias: gly residues. 2 disordered regions span residues 1–124 (MSDE…AGGA) and 168–478 (GAGA…NPKF). The span at 41–50 (RGRGRGRGRG) shows a compositional bias: basic residues. Gly residues-rich tracts occupy residues 51-62 (GGRPGAPGGSGS), 84-124 (GAHG…AGGA), and 168-352 (GAGA…GSGG). An interaction with host C1QBP/P32 region spans residues 325 to 376 (GGGGRGRGGSGGRGRGGSGGRGRGGSGGRRGRGRERARGRSRERARGRGRGR). Residues 328–378 (GRGRGGSGGRGRGGSGGRGRGGSGGRRGRGRERARGRSRERARGRGRGRGE) form a chromosome-tethering GR2 region. The segment covering 358 to 381 (RERARGRSRERARGRGRGRGEKRP) has biased composition (basic and acidic residues). Positions 379 to 386 (KRPRSPSS) are nuclear localization signal. A compositionally biased stretch (low complexity) spans 383 to 394 (SPSSQSSSSGSP). Residues serine 385 and serine 393 each carry the phosphoserine modification. An interaction with host CSNK2B region spans residues 387–395 (QSSSSGSPP). Positions 436–450 (QGPTDDPGEGPSTGP) are interaction with host USP7. The segment at 452 to 607 (GQGDGGRRKK…CSFDDGVDLP (156 aa)) is DBD/DD. A compositionally biased stretch (basic residues) spans 458 to 470 (RRKKGGWFGKHRG). Positions 460, 461, and 518 each coordinate DNA. The For site-specific DNA cleavage activity role is filled by tyrosine 518. A disordered region spans residues 612-641 (PMVEGAAAEGDDGDDGDEGGDGDEGEEGQE). Positions 620-641 (EGDDGDDGDEGGDGDEGEEGQE) are enriched in acidic residues.

The protein belongs to the herpesviridae EBNA1 family. In terms of assembly, homodimer. Dimers can assemble into higher-order oligomers like a homohexamer. Binding to the DS element involves 2 dimers of EBNA1. Interacts with human USP7; this interaction is independent and simultaneous to EBNA1 interaction with CSNK2B as well as necessary for PML nuclear bodies disruption by EBNA1. Interacts with host CSNK2B (via KSSR motif); the interaction requires phosphorylation of EBNA1, is independent and simultaneous to EBNA1 interaction with USP7 as well as necessary for PML nuclear bodies disruption by EBNA1. EBNA1, USP7 and CSNK2B form a ternary complex. EBNA1, USP7 and CSNK2B form a ternary complex. Interacts with human EBP2; it is not clear if this interaction is linked with the ability of EBNA1 to associate with host mitotic chromosomes. Interacts with BGLF4; this interaction facilitates the switch from latent to lytic DNA replication by down-regulating EBNA1 replication function. Interacts with human PAX5; this interaction promotes EBNA1-dependent transcription. Interacts with host KPNA1/Importin subunit alpha-5; this interaction allows the nuclear import of EBNA1. Interacts with host KPNA2/Importin subunit alpha-1; this interaction allows the nuclear import of EBNA1. Interacts with host C1QBP/P32. Interacts with host BIRC5/Survivin; this interaction is probably important for EBV episome maintenance in Burkitt's lymphoma host cells. In terms of processing, phosphorylation at Ser-385 increases the nuclear import efficiency of EBNA1. Phosphorylation at Ser-393 is required for interaction with CSNK2B.

It localises to the host nucleus. In terms of biological role, responsible for the origin of replication (oriP) dependent replication and maintenance of viral episomes during latent infection. EBNA1 dimer interacts with the DS (dyad symmetry) element within the origin of replication oriP and with a host mitotic chromosome to initiate viral DNA replication during latency. EBNA1 binding to DS recruits the host origin recognition complex (ORC). Governs the faithful mitotic segregation of the viral episomes by binding both the FR (family of repeats) element within oriP and the host mitotic chromosomes. Forms a cell cycle-dependent tyrosine-dependent DNA cross-link and single-strand cleavage at oriP required for terminating replication and maintaining viral episomes. Counteracts the stabilization of host p53/TP53 by host USP7, thereby decreasing apoptosis and increasing host cell survival. Induces degradation of host PML through the ubiquitin-proteasome system, which promotes lytic reactivation and may impair the host cell DNA repair. Increases the association of CK2 with PML proteins which increases the phosphorylation of PML proteins by CK2, triggering the polyubiquitylation and degradation of PML. Displays inhibitory effects on a SUMO2-modified complex that includes STUB1, KAP1 and USP7. This inhibitory effect possibly participates to the maintenance of latency linked to PML silencing. This is Epstein-Barr nuclear antigen 1 (EBNA1) from Epstein-Barr virus (strain GD1) (HHV-4).